The primary structure comprises 557 residues: Aerobic glycerol-3-phosphate dehydrogenase (557 aa).

21–49 (DVVIIGGGITGAGIALDASERGMKVALVE) lines the FAD pocket.

This sequence belongs to the FAD-dependent glycerol-3-phosphate dehydrogenase family. The cofactor is FAD.

The protein resides in the cytoplasm. The enzyme catalyses a quinone + sn-glycerol 3-phosphate = dihydroxyacetone phosphate + a quinol. Its pathway is polyol metabolism; glycerol degradation via glycerol kinase pathway; glycerone phosphate from sn-glycerol 3-phosphate (aerobic route): step 1/1. In Staphylococcus saprophyticus subsp. saprophyticus (strain ATCC 15305 / DSM 20229 / NCIMB 8711 / NCTC 7292 / S-41), this protein is Aerobic glycerol-3-phosphate dehydrogenase (glpD).